The chain runs to 67 residues: MPQLDTSTWFIMIFSMFLTLFILFQLKISNHYYPENPMTKSAKIAGQHNPWENKWTKIYSLLSLPPQ.

Residues 8–24 (TWFIMIFSMFLTLFILF) traverse the membrane as a helical segment. Residue Lys54 is modified to N6-acetyllysine; alternate. At Lys54 the chain carries N6-succinyllysine; alternate. Lys57 carries the N6-acetyllysine modification.

The protein belongs to the ATPase protein 8 family. In terms of assembly, component of the ATP synthase complex composed at least of ATP5F1A/subunit alpha, ATP5F1B/subunit beta, ATP5MC1/subunit c (homooctomer), MT-ATP6/subunit a, MT-ATP8/subunit 8, ATP5ME/subunit e, ATP5MF/subunit f, ATP5MG/subunit g, ATP5MK/subunit k, ATP5MJ/subunit j, ATP5F1C/subunit gamma, ATP5F1D/subunit delta, ATP5F1E/subunit epsilon, ATP5PF/subunit F6, ATP5PB/subunit b, ATP5PD/subunit d, ATP5PO/subunit OSCP. ATP synthase complex consists of a soluble F(1) head domain (subunits alpha(3) and beta(3)) - the catalytic core - and a membrane F(0) domain - the membrane proton channel (subunits c, a, 8, e, f, g, k and j). These two domains are linked by a central stalk (subunits gamma, delta, and epsilon) rotating inside the F1 region and a stationary peripheral stalk (subunits F6, b, d, and OSCP). Interacts with PRICKLE3.

The protein resides in the mitochondrion membrane. Its function is as follows. Subunit 8, of the mitochondrial membrane ATP synthase complex (F(1)F(0) ATP synthase or Complex V) that produces ATP from ADP in the presence of a proton gradient across the membrane which is generated by electron transport complexes of the respiratory chain. ATP synthase complex consist of a soluble F(1) head domain - the catalytic core - and a membrane F(1) domain - the membrane proton channel. These two domains are linked by a central stalk rotating inside the F(1) region and a stationary peripheral stalk. During catalysis, ATP synthesis in the catalytic domain of F(1) is coupled via a rotary mechanism of the central stalk subunits to proton translocation. In vivo, can only synthesize ATP although its ATP hydrolase activity can be activated artificially in vitro. Part of the complex F(0) domain. The protein is ATP synthase F(0) complex subunit 8 of Canis lupus familiaris (Dog).